Reading from the N-terminus, the 564-residue chain is Putative zinc metalloproteinase in scaA 5'region (564 aa).

Residues 1 to 564 form the Peptidase M13 domain; the sequence is MTRLQDDFYD…KEADFSAEEF (564 aa). Position 478 (His478) interacts with Zn(2+). Residue Glu479 is part of the active site. 2 residues coordinate Zn(2+): His482 and Glu538. Asp542 (proton donor) is an active-site residue.

Belongs to the peptidase M13 family. Zn(2+) serves as cofactor.

This chain is Putative zinc metalloproteinase in scaA 5'region, found in Streptococcus gordonii (strain Challis / ATCC 35105 / BCRC 15272 / CH1 / DL1 / V288).